Reading from the N-terminus, the 168-residue chain is INO80 complex subunit 3 (168 aa).

Residues 115-129 are compositionally biased toward polar residues; that stretch reads TNSTLSTPKSFHSPL. A disordered region spans residues 115-168; the sequence is TNSTLSTPKSFHSPLQSRGISPSSAQSSAAVSSSRKQKRKRTSEGPSERRARKK. The span at 130 to 148 shows a compositional bias: low complexity; sequence QSRGISPSSAQSSAAVSSS. The segment covering 156 to 168 has biased composition (basic and acidic residues); it reads TSEGPSERRARKK.

As to quaternary structure, component of the INO80 chromatin remodeling complex.

It localises to the nucleus. Its function is as follows. Component of the INO80 complex which remodels chromatin by shifting nucleosomes and is involved in DNA repair. The sequence is that of INO80 complex subunit 3 (iec3) from Schizosaccharomyces pombe (strain 972 / ATCC 24843) (Fission yeast).